The sequence spans 225 residues: Plasma membrane-associated cation-binding protein 1 (225 aa).

Residue G2 is the site of N-myristoyl glycine attachment. Residue T32 is modified to Phosphothreonine. Position 107 is a phosphoserine (S107). Basic and acidic residues predominate over residues 140–197; it reads PVEEVKAEEPAKTEEPAKTEGTSGEKEEIVEETKKGETPETAVVEEKKPEVEEKKEEA. The segment at 140–225 is disordered; that stretch reads PVEEVKAEEP…TAPVAEPPKP (86 aa). 2 positions are modified to phosphothreonine: T152 and T177.

Belongs to the DREPP family. Interacts with Turnip mosaic virus (TuMV) P3N-PIPO. The cofactor is Cu(2+). As to expression, mostly expressed in the basal region of hypocotyls. Expressed in seedlings, roots, shoots, stems, leaves (e.g. in epidermis and vascular tissues), flowers (e.g. in pistils and anthers) and siliques (at protein level).

It is found in the cell membrane. The protein resides in the cytoplasm. It localises to the cytoskeleton. The protein localises to the cell junction. Its subcellular location is the plasmodesma. Its function is as follows. May be involved in intracellular signaling through interaction with PtdInsPs and calmodulin (CaM); may keep PtdInsPs attached to the plasma membrane until Ca(2+)-CaM reaches a competitive concentration subsequent to an increase triggered by a stimulus, thus leading to PtdInsPs release and subsequent activation of InsPs-dependent signaling cascade. Interacts competitively at the N-terminus with calcium ions and CaM (in a calcium-dependent manner), and with the phosphatidylinositol phosphates PtdIns(3,4,5)P(3), PtdIns(3,4)P(2), PtdIns(4,5)P(2) and PtdIns(3,5)P(2). Also binds weakly to PtdIns(3)P, PtdIns(4)P and PtdIns(5)P. Negative regulator of hypocotyl cell elongation by destabilizing cortical microtubules in a calcium-dependent manner. Binds directly to and destabilized microtubules to enhance microtubule depolymerization when cytoplasmic calcium increases. In case of Turnip mosaic virus (TuMV) infection, confers sensitivity by promoting viral cell-to-cell movement through interaction with viral P3N-PIPO. The sequence is that of Plasma membrane-associated cation-binding protein 1 (PCAP1) from Arabidopsis thaliana (Mouse-ear cress).